Reading from the N-terminus, the 378-residue chain is UDP-N-acetylglucosamine 2-epimerase (378 aa).

The active site involves His-214.

The protein belongs to the UDP-N-acetylglucosamine 2-epimerase family.

It catalyses the reaction UDP-N-acetyl-alpha-D-glucosamine = UDP-N-acetyl-alpha-D-mannosamine. Its pathway is bacterial outer membrane biogenesis; LPS O-antigen biosynthesis. The chain is UDP-N-acetylglucosamine 2-epimerase (rfbC) from Salmonella borreze.